The chain runs to 319 residues: MIFYTLEHILTHISFSLVSIGITIFLITLSVDEIIGLYDSSEKGVIGTFLCITGLLVTRWAYSGHFPLSNLYESLLFLSWSFAIIHMFPYFKKQKSYVRTITSSSTIFTQGLVTSGLLSEMQQSEILVPALQSQWLMMHVSMMVLGYAALLCGSLLSVALLVITFRKALRIFSKKKAFLKDSFSFVEIQYRNEPSNVLLSTSFISSKNYYRAQLIQQLDRWSSRIISLGFIFLTIGILSGAVWANEAWGSYWNWDPKETWAFITWTMFAIYLHTRTNPNFQSVNSAIVAFLGFIIIWICYFGVNLLGIGLHSYGSFNLH.

A run of 7 helical transmembrane segments spans residues I9–L29, G44–G64, L71–F91, M143–I163, I225–N245, T259–H273, and A286–L306.

It belongs to the CcmF/CycK/Ccl1/NrfE/CcsA family. May interact with Ccs1.

It localises to the plastid. Its subcellular location is the chloroplast thylakoid membrane. Its function is as follows. Required during biogenesis of c-type cytochromes (cytochrome c6 and cytochrome f) at the step of heme attachment. This chain is Cytochrome c biogenesis protein CcsA, found in Oenothera biennis (German evening primrose).